The primary structure comprises 121 residues: Large ribosomal subunit protein bL12 (121 aa).

Belongs to the bacterial ribosomal protein bL12 family. Homodimer. Part of the ribosomal stalk of the 50S ribosomal subunit. Forms a multimeric L10(L12)X complex, where L10 forms an elongated spine to which 2 to 4 L12 dimers bind in a sequential fashion. Binds GTP-bound translation factors.

Its function is as follows. Forms part of the ribosomal stalk which helps the ribosome interact with GTP-bound translation factors. Is thus essential for accurate translation. This chain is Large ribosomal subunit protein bL12, found in Streptococcus suis (strain 98HAH33).